A 150-amino-acid polypeptide reads, in one-letter code: Protein Smg homolog (150 aa).

This sequence belongs to the Smg family.

The chain is Protein Smg homolog from Leptothrix cholodnii (strain ATCC 51168 / LMG 8142 / SP-6) (Leptothrix discophora (strain SP-6)).